The sequence spans 157 residues: S-ribosylhomocysteine lyase (157 aa).

Residues His54, His58, and Cys124 each contribute to the Fe cation site.

The protein belongs to the LuxS family. Homodimer. Fe cation is required as a cofactor.

The enzyme catalyses S-(5-deoxy-D-ribos-5-yl)-L-homocysteine = (S)-4,5-dihydroxypentane-2,3-dione + L-homocysteine. Its function is as follows. Involved in the synthesis of autoinducer 2 (AI-2) which is secreted by bacteria and is used to communicate both the cell density and the metabolic potential of the environment. The regulation of gene expression in response to changes in cell density is called quorum sensing. Catalyzes the transformation of S-ribosylhomocysteine (RHC) to homocysteine (HC) and 4,5-dihydroxy-2,3-pentadione (DPD). This Lactobacillus acidophilus (strain ATCC 700396 / NCK56 / N2 / NCFM) protein is S-ribosylhomocysteine lyase.